A 177-amino-acid polypeptide reads, in one-letter code: Large ribosomal subunit protein uL6 (177 aa).

This sequence belongs to the universal ribosomal protein uL6 family. In terms of assembly, part of the 50S ribosomal subunit.

This protein binds to the 23S rRNA, and is important in its secondary structure. It is located near the subunit interface in the base of the L7/L12 stalk, and near the tRNA binding site of the peptidyltransferase center. This is Large ribosomal subunit protein uL6 from Mannheimia succiniciproducens (strain KCTC 0769BP / MBEL55E).